We begin with the raw amino-acid sequence, 314 residues long: tRNA-cytidine(32) 2-sulfurtransferase (314 aa).

Positions 57-62 (SGGKDS) match the PP-loop motif motif. Cysteine 132, cysteine 135, and cysteine 223 together coordinate [4Fe-4S] cluster.

Belongs to the TtcA family. In terms of assembly, homodimer. Mg(2+) is required as a cofactor. [4Fe-4S] cluster serves as cofactor.

The protein resides in the cytoplasm. It catalyses the reaction cytidine(32) in tRNA + S-sulfanyl-L-cysteinyl-[cysteine desulfurase] + AH2 + ATP = 2-thiocytidine(32) in tRNA + L-cysteinyl-[cysteine desulfurase] + A + AMP + diphosphate + H(+). It participates in tRNA modification. Catalyzes the ATP-dependent 2-thiolation of cytidine in position 32 of tRNA, to form 2-thiocytidine (s(2)C32). The sulfur atoms are provided by the cysteine/cysteine desulfurase (IscS) system. This is tRNA-cytidine(32) 2-sulfurtransferase from Alkalilimnicola ehrlichii (strain ATCC BAA-1101 / DSM 17681 / MLHE-1).